The chain runs to 785 residues: LPS-assembly protein LptD (785 aa).

An N-terminal signal peptide occupies residues 1–58 (MSCSCLCMSLYRGADRIGRFYTAHCPQDMALCMHRQKLNPLALALAAAFALNAPAALA).

This sequence belongs to the LptD family. As to quaternary structure, component of the lipopolysaccharide transport and assembly complex. Interacts with LptE and LptA.

Its subcellular location is the cell outer membrane. In terms of biological role, together with LptE, is involved in the assembly of lipopolysaccharide (LPS) at the surface of the outer membrane. The sequence is that of LPS-assembly protein LptD from Chromobacterium violaceum (strain ATCC 12472 / DSM 30191 / JCM 1249 / CCUG 213 / NBRC 12614 / NCIMB 9131 / NCTC 9757 / MK).